The chain runs to 571 residues: MEEKELRDLVRRYALENAARYGGRANPNAVMKKIMKEHEELRPRAKEVLKTVREVVREVNKMSGEEIRRELEELGGPREDVARDKEGLKPLPGAEPGNVRLRFAPNPSGPLHIGHARAAVLNDEYARRYDGTLVLRIEDTDPRRVDPEAYDMIEEDLEWLGVNIDERYVQSNRIELYYMVCEELLEREGAYVCTCDPDEFRRLRDVGRACPCRSRDKEENLELWEEMLDGTFSEGEAVVRVKTEVDHPDPAVREWIAFRIVEEEHPMTGSRYLVWPTMNFAVAVDDHLMNITHVLRGKDHESNTRRQKYVFEHLGWDTPEYVHYGILKVEGAVLSTSEIRRGIDSGEYTGWDDVRVATLRALRRRGIKPEAIRETILEIGLTDVDATFSWEHLYARNRKMIDPESHRYFFVRDPVELRIEGMKESVLARLPLHPDRDEGERVLILHPENGVARALLDGEDAEDLWEGDVVRLMNAVNVEIEEVGDGWLRGRYHSDDYRIAKEEGAQIVHWVPPDQAVRCEVVRPDGSVESGYAEINVEREQAGSTVQFERLYFVRLEEVSSGGVRAVYAHD.

The span at 75–88 (GGPREDVARDKEGL) shows a compositional bias: basic and acidic residues. The segment at 75–98 (GGPREDVARDKEGLKPLPGAEPGN) is disordered. A 'HIGH' region motif is present at residues 105 to 115 (PNPSGPLHIGH).

It belongs to the class-I aminoacyl-tRNA synthetase family. Glutamate--tRNA ligase type 2 subfamily.

The protein resides in the cytoplasm. The catalysed reaction is tRNA(Glu) + L-glutamate + ATP = L-glutamyl-tRNA(Glu) + AMP + diphosphate. Its function is as follows. Catalyzes the attachment of glutamate to tRNA(Glu) in a two-step reaction: glutamate is first activated by ATP to form Glu-AMP and then transferred to the acceptor end of tRNA(Glu). This chain is Glutamate--tRNA ligase, found in Methanopyrus kandleri (strain AV19 / DSM 6324 / JCM 9639 / NBRC 100938).